Reading from the N-terminus, the 315-residue chain is D-alanine--D-alanine ligase (315 aa).

One can recognise an ATP-grasp domain in the interval 101–297; that stretch reads KHIFRSLNID…FNELVKIIIE (197 aa). An ATP-binding site is contributed by 128–181; that stretch reads KIDYPYVLKPINEGSSIGVYIIFSHEDYLELKNNSSTIMEKMIVEEYIPGIELH. Mg(2+) contacts are provided by Asp249, Glu263, and Asn265.

Belongs to the D-alanine--D-alanine ligase family. The cofactor is Mg(2+). Mn(2+) is required as a cofactor.

Its subcellular location is the cytoplasm. The enzyme catalyses 2 D-alanine + ATP = D-alanyl-D-alanine + ADP + phosphate + H(+). It participates in cell wall biogenesis; peptidoglycan biosynthesis. In terms of biological role, cell wall formation. In Wolbachia pipientis wMel, this protein is D-alanine--D-alanine ligase.